The primary structure comprises 130 residues: Ribonuclease P protein component (130 aa).

This sequence belongs to the RnpA family. Consists of a catalytic RNA component (M1 or rnpB) and a protein subunit.

The enzyme catalyses Endonucleolytic cleavage of RNA, removing 5'-extranucleotides from tRNA precursor.. RNaseP catalyzes the removal of the 5'-leader sequence from pre-tRNA to produce the mature 5'-terminus. It can also cleave other RNA substrates such as 4.5S RNA. The protein component plays an auxiliary but essential role in vivo by binding to the 5'-leader sequence and broadening the substrate specificity of the ribozyme. This chain is Ribonuclease P protein component, found in Desulfovibrio desulfuricans (strain ATCC 27774 / DSM 6949 / MB).